The chain runs to 521 residues: Potassium/proton antiporter CemA (521 aa).

5 helical membrane passes run 68–88, 294–314, 399–419, 446–466, and 481–501; these read FVFIIYWSVLECKTSIYLLNI, ALASLQYLGCLILIPWGISFP, ILHLLTDIIYFAIPSASFISG, ILLLTDSCIGFHSPHGWEILI, and IISCFVSTFPVISDTVFKYWI.

Belongs to the CemA family.

It localises to the plastid. The protein localises to the chloroplast inner membrane. It catalyses the reaction K(+)(in) + H(+)(out) = K(+)(out) + H(+)(in). Contributes to K(+)/H(+) antiport activity by supporting proton efflux to control proton extrusion and homeostasis in chloroplasts in a light-dependent manner to modulate photosynthesis. Prevents excessive induction of non-photochemical quenching (NPQ) under continuous-light conditions. Indirectly promotes efficient inorganic carbon uptake into chloroplasts. The polypeptide is Potassium/proton antiporter CemA (Huperzia lucidula (Shining clubmoss)).